The chain runs to 111 residues: Large ribosomal subunit protein uL22 (111 aa).

It belongs to the universal ribosomal protein uL22 family. Part of the 50S ribosomal subunit.

Functionally, this protein binds specifically to 23S rRNA; its binding is stimulated by other ribosomal proteins, e.g. L4, L17, and L20. It is important during the early stages of 50S assembly. It makes multiple contacts with different domains of the 23S rRNA in the assembled 50S subunit and ribosome. The globular domain of the protein is located near the polypeptide exit tunnel on the outside of the subunit, while an extended beta-hairpin is found that lines the wall of the exit tunnel in the center of the 70S ribosome. The protein is Large ribosomal subunit protein uL22 of Geotalea uraniireducens (strain Rf4) (Geobacter uraniireducens).